An 80-amino-acid chain; its full sequence is Conotoxin Lt6.2 (80 aa).

Positions 1–24 (MKLTRVLIIAVLFLTAYQLTTVET) are cleaved as a signal peptide. Residues 25–47 (YSRGKWMHRALRSTGKNPKVTRE) constitute a propeptide that is removed on maturation. Disulfide bonds link Cys-48-Cys-62, Cys-55-Cys-66, and Cys-61-Cys-73.

This sequence belongs to the conotoxin O1 superfamily. As to expression, expressed by the venom duct.

The protein resides in the secreted. This Conus litteratus (Lettered cone) protein is Conotoxin Lt6.2.